A 446-amino-acid polypeptide reads, in one-letter code: 6-methylsalicylate 1-monooxygenase atA (446 aa).

Residues 7–27 traverse the membrane as a helical segment; the sequence is VSVAIIGGGIGGLSLAIGLLQ. 2 residues coordinate FAD: Glu-37 and Ala-50. Asn-107 carries N-linked (GlcNAc...) asparagine glycosylation. Arg-116 lines the FAD pocket. The active site involves Arg-200. 2 residues coordinate FAD: Asp-311 and Ala-324.

The protein belongs to the paxM FAD-dependent monooxygenase family. The cofactor is FAD.

The protein resides in the membrane. It catalyses the reaction 6-methylsalicylate + AH2 + O2 + H(+) = 3-methylcatechol + A + CO2 + H2O. It participates in secondary metabolite biosynthesis. Its function is as follows. 6-methylsalicylate 1-monooxygenase; part of the gene cluster that mediates the biosynthesis of terreic acid, a quinone epoxide inhibitor of Bruton's tyrosine kinase. The first step of the pathway is the synthesis of 6-methylsalicylic acid (6-MSA) by the 6-methylsalicylic acid synthase atX. In the biosynthesis of 6-MSA, atX utilizes one acetyl-CoA and three malonyl-CoAs as its substrates and catalyzes a series of programmed reactions including Claisen condensation, reduction, aldol cyclization, and the hydrolytic cleavage that yields 6-MSA. The 6-methylsalicylate 1-monooxygenase atA then catalyzes the decarboxylative hydroxylation of 6-MSA to 3-methylcatechol. The next step is the conversion of 3-methylcatechol to 3-methyl-1,2,4-benzenetriol by cytochrome P450 monooxygenase atE, which is enhanced by cytochrome P450 monooxygenase atG. Then, the epoxidase atD catalyzes the epoxidation and hydroxyl oxidation of 3-methyl-1,2,4-benzenetriol to terremutin. Lastly, GMC oxidoreductase atC oxidizes terremutin to terreic acid. This chain is 6-methylsalicylate 1-monooxygenase atA, found in Aspergillus terreus (strain NIH 2624 / FGSC A1156).